Consider the following 258-residue polypeptide: MLAKRIIPCLDVRDGQVVKGVQFRNHEIIGDIVPLAKRYAEEGADELVFYDITASSDGRVVDKSWVSRVAEVIDIPFCVAGGIKSLEDAAKILSFGADKISINSPALADPTLITRLADRFGVQCIVVGIDTWYDGETGKYHVNQYTGDESRTRVTQWETLDWVQEVQKRGAGEIVLNMMNQDGVRNGYDLEQLKKVREVCHVPLIASGGAGTMEHFLEAFRDADVDGALAASVFHKQIINIGELKAYLATQGVEIRIC.

Residues Asp-11 and Asp-130 contribute to the active site.

Belongs to the HisA/HisF family. Heterodimer of HisH and HisF.

The protein resides in the cytoplasm. It carries out the reaction 5-[(5-phospho-1-deoxy-D-ribulos-1-ylimino)methylamino]-1-(5-phospho-beta-D-ribosyl)imidazole-4-carboxamide + L-glutamine = D-erythro-1-(imidazol-4-yl)glycerol 3-phosphate + 5-amino-1-(5-phospho-beta-D-ribosyl)imidazole-4-carboxamide + L-glutamate + H(+). The protein operates within amino-acid biosynthesis; L-histidine biosynthesis; L-histidine from 5-phospho-alpha-D-ribose 1-diphosphate: step 5/9. Its function is as follows. IGPS catalyzes the conversion of PRFAR and glutamine to IGP, AICAR and glutamate. The HisF subunit catalyzes the cyclization activity that produces IGP and AICAR from PRFAR using the ammonia provided by the HisH subunit. This chain is Imidazole glycerol phosphate synthase subunit HisF, found in Shigella sonnei (strain Ss046).